A 176-amino-acid chain; its full sequence is NAD(P)H-quinone oxidoreductase subunit 6, chloroplastic (176 aa).

5 helical membrane passes run 10-30, 32-52, 61-81, 92-112, and 152-172; these read FLLV…VLLP, PIFS…LYIL, AQLL…VMFM, LWTV…FLLM, and FFLP…GAIS.

Belongs to the complex I subunit 6 family. In terms of assembly, NDH is composed of at least 16 different subunits, 5 of which are encoded in the nucleus.

It localises to the plastid. It is found in the chloroplast thylakoid membrane. It catalyses the reaction a plastoquinone + NADH + (n+1) H(+)(in) = a plastoquinol + NAD(+) + n H(+)(out). It carries out the reaction a plastoquinone + NADPH + (n+1) H(+)(in) = a plastoquinol + NADP(+) + n H(+)(out). NDH shuttles electrons from NAD(P)H:plastoquinone, via FMN and iron-sulfur (Fe-S) centers, to quinones in the photosynthetic chain and possibly in a chloroplast respiratory chain. The immediate electron acceptor for the enzyme in this species is believed to be plastoquinone. Couples the redox reaction to proton translocation, and thus conserves the redox energy in a proton gradient. This chain is NAD(P)H-quinone oxidoreductase subunit 6, chloroplastic (ndhG), found in Capsella bursa-pastoris (Shepherd's purse).